We begin with the raw amino-acid sequence, 856 residues long: Dynamin-1 (856 aa).

The region spanning 28 to 294 (DLDLPQIAVV…LTNHIRDTLP (267 aa)) is the Dynamin-type G domain. The tract at residues 38-45 (GGQSAGKS) is G1 motif. GDP-binding residues include Ser-41, Gly-43, Lys-44, Ser-45, Ser-46, Arg-59, and Gly-60. The segment at 64-66 (VTR) is G2 motif. Residue Tyr-80 is modified to Phosphotyrosine. Tyr-125 is modified (3'-nitrotyrosine; alternate). The residue at position 125 (Tyr-125) is a Phosphotyrosine; alternate. A G3 motif region spans residues 136 to 139 (DLPG). Residues 205–208 (TKLD) are G4 motif. The GDP site is built by Lys-206, Asp-208, Asp-211, Asn-236, Arg-237, and Gln-239. The G5 motif stretch occupies residues 235-238 (VNRS). Phosphoserine occurs at positions 306 and 347. The residue at position 354 (Tyr-354) is a Phosphotyrosine. Ser-512 bears the Phosphoserine mark. The region spanning 519-625 (LVIRKGWLTI…WKASFLRAGV (107 aa)) is the PH domain. A GED domain is found at 659–750 (VETIRNLVDS…IIGDINTTTV (92 aa)). Residues 750-856 (VSTPMPPPVD…PIGSGKSIPS (107 aa)) are disordered. Positions 763-781 (LQVQSVPTGRRSPTSSPTP) are enriched in polar residues. Phosphoserine occurs at positions 774 and 778. Arg-796 bears the Omega-N-methylarginine mark. The residue at position 822 (Ser-822) is a Phosphoserine. The span at 825–844 (PFGPPPQVPSRPNRAPPGVP) shows a compositional bias: pro residues.

The protein belongs to the TRAFAC class dynamin-like GTPase superfamily. Dynamin/Fzo/YdjA family. In terms of assembly, homodimer; homodimerization is mediated by the dynamin-type G domain which promotes assembly-stimulated GTPase activity. Homo-tetramer formed from two dimers in the absence of lipid. Oligomerizes into a helical polymer that self-assembles around the vesicle membrane, when associated to the menbrane through lipid binding. Interacts (via C-terminal proline-rich domain (PRD)) with SNX9 (via SH3 domain); this interaction allows regulation of DNM1 self-assembly during late stages of endocytic vesicle formation and supports DNM1's early functions in accelerating clathrin-coated pits (CCPs) maturation in non neuronals cell. Interacts (via C-terminal proline-rich domain (PRD)) with MYO1E (via SH3 domain); this interaction regulates receptor-mediated endocytosis. Interacts with SNX33 (via SH3 domain); this interaction decreases DNM1-dependent endocytosis. Interacts with DIAPH1. Interacts with GRB2 (via SH3 domain); this interaction mediates disassembly of DNM1 polymers, therefore modulates self-assembly. Forms a complex with BIN1 (via SH3 domain) and SH3GL2 (via SH3 domain). Forms a complex with SH3GL2 (via SH3 domain) and AMPH (via SH3 domain). Forms a complex with SH3GL2 (via SH3 domain) and SYNJ1. Interacts with AMPH. Interacts (via C-terminal proline-rich domain (PRD)) with SYT1; this interaction facilitates vesicle fission during clathrin-mediated endocytosis (CME). Interacts (via C-terminal proline-rich domain (PRD)) with PLCG1 (via SH3 domain); this interaction stimulates the release of GDP from DNM1 and enhances DNM1-dependent endocytosis. Interacts with SNPH; this interaction inhibits the binding of DNM1 to AMPH and DNM1-receptor-mediated endocytosis. Interacts with CAV1. Interacts with SH3GLB1 (via SH3 domain). Interacts with PACSIN1 (via SH3 domain), PACSIN2 (via SH3 domain) and PACSIN3 (via SH3 domain). Interacts with UNC119; this interaction decreases DNM1's GTPase activity and affects DNM1's interaction with AMPH. Interacts with AMPH. Interacts (GTP-bound form) with DNAJC6; this interaction allows clathrin-coated vesicle (CCV) formation at the plasma membrane. Phosphorylation at Ser-774 by GSK3B/GSK3-beta leads to inactivation of receptor-mediated endocytosis in non-neuronal cells. Dephosphorylation at Ser-774, through the EGFR downstream signaling, leads to activation and regulates early stages of clathrin-mediated endocytosis (CME).

It localises to the cell membrane. The protein resides in the membrane. The protein localises to the clathrin-coated pit. It is found in the cytoplasmic vesicle. Its subcellular location is the presynapse. It localises to the secretory vesicle. The protein resides in the chromaffin granule. It carries out the reaction GTP + H2O = GDP + phosphate + H(+). Catalyzes the hydrolysis of GTP and utilizes this energy to mediate vesicle scission and participates in many forms of endocytosis, such as clathrin-mediated endocytosis or synaptic vesicle endocytosis as well as rapid endocytosis (RE). Associates to the membrane, through lipid binding, and self-assembles into rings and stacks of interconnected rings through oligomerization to form a helical polymer around the vesicle membrane leading to constriction of invaginated coated pits around their necks. Self-assembly of the helical polymer induces membrane tubules narrowing until the polymer reaches a length sufficient to trigger GTP hydrolysis. Depending on the curvature imposed on the tubules, membrane detachment from the helical polymer upon GTP hydrolysis can cause spontaneous hemifission followed by complete fission. May play a role in regulating early stages of clathrin-mediated endocytosis in non-neuronal cells through its activation by dephosphorylation via the signaling downstream of EGFR. Controls vesicle size at a step before fission, during formation of membrane pits, at hippocampal synapses. Controls plastic adaptation of the synaptic vesicle recycling machinery to high levels of activity. Mediates rapid endocytosis (RE), a Ca(2+)-dependent and clathrin- and K(+)-independent process in chromaffin cells. Microtubule-associated force-producing protein involved in producing microtubule bundles and able to bind and hydrolyze GTP. Through its interaction with DNAJC6, acts during the early steps of clathrin-coated vesicle (CCV) formation. This chain is Dynamin-1, found in Bos taurus (Bovine).